A 409-amino-acid polypeptide reads, in one-letter code: Small ribosomal subunit protein mS47 (409 aa).

Residues Met-1–Phe-26 constitute a mitochondrion transit peptide. The tract at residues Ala-388–Phe-409 is disordered.

The protein belongs to the enoyl-CoA hydratase/isomerase family. Mitochondrion-specific ribosomal protein mS47 subfamily. As to quaternary structure, component of the mitochondrial ribosome small subunit.

The protein localises to the mitochondrion. This is Small ribosomal subunit protein mS47 from Arabidopsis thaliana (Mouse-ear cress).